We begin with the raw amino-acid sequence, 211 residues long: ATP phosphoribosyltransferase (211 aa).

Belongs to the ATP phosphoribosyltransferase family. Short subfamily. As to quaternary structure, heteromultimer composed of HisG and HisZ subunits.

The protein resides in the cytoplasm. The catalysed reaction is 1-(5-phospho-beta-D-ribosyl)-ATP + diphosphate = 5-phospho-alpha-D-ribose 1-diphosphate + ATP. The protein operates within amino-acid biosynthesis; L-histidine biosynthesis; L-histidine from 5-phospho-alpha-D-ribose 1-diphosphate: step 1/9. In terms of biological role, catalyzes the condensation of ATP and 5-phosphoribose 1-diphosphate to form N'-(5'-phosphoribosyl)-ATP (PR-ATP). Has a crucial role in the pathway because the rate of histidine biosynthesis seems to be controlled primarily by regulation of HisG enzymatic activity. The chain is ATP phosphoribosyltransferase from Pseudomonas putida (strain GB-1).